The primary structure comprises 208 residues: Peroxiredoxin (208 aa).

One can recognise a Thioredoxin domain in the interval 2-156 (PLLGDDFPQL…IVRAVKALQT (155 aa)). Cys-44 functions as the Cysteine sulfenic acid (-SOH) intermediate in the catalytic mechanism. Arg-119 lines the substrate pocket.

The protein belongs to the peroxiredoxin family. Prx6 subfamily. As to quaternary structure, homodecamer. Pentamer of dimers that assemble into a ring structure.

The protein localises to the cytoplasm. The catalysed reaction is a hydroperoxide + [thioredoxin]-dithiol = an alcohol + [thioredoxin]-disulfide + H2O. Thiol-specific peroxidase that catalyzes the reduction of hydrogen peroxide and organic hydroperoxides to water and alcohols, respectively. Plays a role in cell protection against oxidative stress by detoxifying peroxides. This chain is Peroxiredoxin, found in Treponema denticola (strain ATCC 35405 / DSM 14222 / CIP 103919 / JCM 8153 / KCTC 15104).